Here is a 306-residue protein sequence, read N- to C-terminus: UDP-3-O-acyl-N-acetylglucosamine deacetylase (306 aa).

Zn(2+) is bound by residues His79, His238, and Asp242. The Proton donor role is filled by His265.

The protein belongs to the LpxC family. Requires Zn(2+) as cofactor.

It carries out the reaction a UDP-3-O-[(3R)-3-hydroxyacyl]-N-acetyl-alpha-D-glucosamine + H2O = a UDP-3-O-[(3R)-3-hydroxyacyl]-alpha-D-glucosamine + acetate. Its pathway is glycolipid biosynthesis; lipid IV(A) biosynthesis; lipid IV(A) from (3R)-3-hydroxytetradecanoyl-[acyl-carrier-protein] and UDP-N-acetyl-alpha-D-glucosamine: step 2/6. Catalyzes the hydrolysis of UDP-3-O-myristoyl-N-acetylglucosamine to form UDP-3-O-myristoylglucosamine and acetate, the committed step in lipid A biosynthesis. The sequence is that of UDP-3-O-acyl-N-acetylglucosamine deacetylase from Shewanella halifaxensis (strain HAW-EB4).